The following is a 117-amino-acid chain: Small ribosomal subunit protein uS19c (117 aa).

The protein belongs to the universal ribosomal protein uS19 family.

The protein resides in the plastid. Protein S19 forms a complex with S13 that binds strongly to the 16S ribosomal RNA. In Helicosporidium sp. subsp. Simulium jonesii (Green alga), this protein is Small ribosomal subunit protein uS19c (rps19).